The chain runs to 240 residues: tRNA (guanine-N(1)-)-methyltransferase (240 aa).

S-adenosyl-L-methionine-binding positions include G110 and L129–L134.

It belongs to the RNA methyltransferase TrmD family. As to quaternary structure, homodimer.

Its subcellular location is the cytoplasm. It carries out the reaction guanosine(37) in tRNA + S-adenosyl-L-methionine = N(1)-methylguanosine(37) in tRNA + S-adenosyl-L-homocysteine + H(+). Its function is as follows. Specifically methylates guanosine-37 in various tRNAs. This is tRNA (guanine-N(1)-)-methyltransferase from Clostridium botulinum (strain Langeland / NCTC 10281 / Type F).